A 317-amino-acid polypeptide reads, in one-letter code: Transaldolase (317 aa).

Catalysis depends on Lys126, which acts as the Schiff-base intermediate with substrate.

It belongs to the transaldolase family. Type 1 subfamily. As to quaternary structure, homodimer.

The protein resides in the cytoplasm. It catalyses the reaction D-sedoheptulose 7-phosphate + D-glyceraldehyde 3-phosphate = D-erythrose 4-phosphate + beta-D-fructose 6-phosphate. Its pathway is carbohydrate degradation; pentose phosphate pathway; D-glyceraldehyde 3-phosphate and beta-D-fructose 6-phosphate from D-ribose 5-phosphate and D-xylulose 5-phosphate (non-oxidative stage): step 2/3. In terms of biological role, transaldolase is important for the balance of metabolites in the pentose-phosphate pathway. This chain is Transaldolase, found in Burkholderia mallei (strain SAVP1).